The primary structure comprises 445 residues: Guanosine nucleotide diphosphate dissociation inhibitor At5g09550 (445 aa).

It belongs to the Rab GDI family.

Regulates the GDP/GTP exchange reaction of most RAB proteins by inhibiting the dissociation of GDP from them, and the subsequent binding of GTP. The protein is Guanosine nucleotide diphosphate dissociation inhibitor At5g09550 of Arabidopsis thaliana (Mouse-ear cress).